The primary structure comprises 302 residues: UDP-N-acetylenolpyruvoylglucosamine reductase (302 aa).

The FAD-binding PCMH-type domain maps to 27–192 (KVGGAVDYLA…LSAKFALRPG (166 aa)). Arg-171 is an active-site residue. Residue Ser-221 is the Proton donor of the active site. The active site involves Glu-291.

This sequence belongs to the MurB family. FAD serves as cofactor.

It localises to the cytoplasm. The catalysed reaction is UDP-N-acetyl-alpha-D-muramate + NADP(+) = UDP-N-acetyl-3-O-(1-carboxyvinyl)-alpha-D-glucosamine + NADPH + H(+). It functions in the pathway cell wall biogenesis; peptidoglycan biosynthesis. Functionally, cell wall formation. The chain is UDP-N-acetylenolpyruvoylglucosamine reductase from Streptococcus suis (strain 98HAH33).